Here is a 313-residue protein sequence, read N- to C-terminus: Beta-lactamase (313 aa).

The first 15 residues, M1–V15, serve as a signal peptide directing secretion. S190 (acyl-ester intermediate) is an active-site residue.

This sequence belongs to the class-C beta-lactamase family.

It carries out the reaction a beta-lactam + H2O = a substituted beta-amino acid. Functionally, upon expression in E.coli enables the latter to utilize penicillin as a carbon source. This is Beta-lactamase (penA) from Burkholderia multivorans (strain ATCC 17616 / 249).